Here is a 490-residue protein sequence, read N- to C-terminus: Aspartyl/glutamyl-tRNA(Asn/Gln) amidotransferase subunit B (490 aa).

It belongs to the GatB/GatE family. GatB subfamily. In terms of assembly, heterotrimer of A, B and C subunits.

It catalyses the reaction L-glutamyl-tRNA(Gln) + L-glutamine + ATP + H2O = L-glutaminyl-tRNA(Gln) + L-glutamate + ADP + phosphate + H(+). It carries out the reaction L-aspartyl-tRNA(Asn) + L-glutamine + ATP + H2O = L-asparaginyl-tRNA(Asn) + L-glutamate + ADP + phosphate + 2 H(+). Its function is as follows. Allows the formation of correctly charged Asn-tRNA(Asn) or Gln-tRNA(Gln) through the transamidation of misacylated Asp-tRNA(Asn) or Glu-tRNA(Gln) in organisms which lack either or both of asparaginyl-tRNA or glutaminyl-tRNA synthetases. The reaction takes place in the presence of glutamine and ATP through an activated phospho-Asp-tRNA(Asn) or phospho-Glu-tRNA(Gln). The chain is Aspartyl/glutamyl-tRNA(Asn/Gln) amidotransferase subunit B from Burkholderia pseudomallei (strain 1106a).